Consider the following 202-residue polypeptide: Transcriptional regulator GfcR 2 (202 aa).

It belongs to the purine/pyrimidine phosphoribosyltransferase family. GfcR subfamily.

The chain is Transcriptional regulator GfcR 2 from Methanosarcina barkeri (strain Fusaro / DSM 804).